The sequence spans 553 residues: Glutamine--tRNA ligase (553 aa).

A 'HIGH' region motif is present at residues 34 to 44 (PEPNGYLHIGH). Residues 35–37 (EPN) and 41–47 (HIGHAKS) contribute to the ATP site. L-glutamine is bound by residues D68 and Y213. ATP is bound by residues T232 and 262–263 (RL). The short motif at 269–273 (LTSKR) is the 'KMSKS' region element.

Belongs to the class-I aminoacyl-tRNA synthetase family. In terms of assembly, monomer.

The protein resides in the cytoplasm. The catalysed reaction is tRNA(Gln) + L-glutamine + ATP = L-glutaminyl-tRNA(Gln) + AMP + diphosphate. This is Glutamine--tRNA ligase from Psychromonas ingrahamii (strain DSM 17664 / CCUG 51855 / 37).